A 210-amino-acid chain; its full sequence is Urease accessory protein UreF (210 aa).

It belongs to the UreF family. As to quaternary structure, ureD, UreF and UreG form a complex that acts as a GTP-hydrolysis-dependent molecular chaperone, activating the urease apoprotein by helping to assemble the nickel containing metallocenter of UreC. The UreE protein probably delivers the nickel.

The protein resides in the cytoplasm. Required for maturation of urease via the functional incorporation of the urease nickel metallocenter. This chain is Urease accessory protein UreF, found in Cereibacter sphaeroides (strain KD131 / KCTC 12085) (Rhodobacter sphaeroides).